A 375-amino-acid chain; its full sequence is Putative fimbrium tip subunit Fim1C (375 aa).

Residues 1 to 16 (MKLLANIFLSGLAILA) form the signal peptide. A lipid anchor (N-palmitoyl cysteine) is attached at Cys17. The S-diacylglycerol cysteine moiety is linked to residue Cys17. A propeptide spanning residues 17–47 (CVSCSKDEDPVLPLEGAKLSVAVKASGTATK) is cleaved from the precursor.

It belongs to the bacteroidetes fimbrillin superfamily. FimA/Mfa1 family. In terms of assembly, may be part of the fimbrial tip.

It is found in the fimbrium. The protein localises to the cell outer membrane. Functionally, probably a component of the fimbrium tip. Fimbriae are filamentous appendages on the cell surface that mediate cell adhesion and biofilm formation. The chain is Putative fimbrium tip subunit Fim1C from Parabacteroides distasonis (strain ATCC 8503 / DSM 20701 / CIP 104284 / JCM 5825 / NCTC 11152).